A 100-amino-acid chain; its full sequence is Large ribosomal subunit protein uL23 (100 aa).

This sequence belongs to the universal ribosomal protein uL23 family. As to quaternary structure, part of the 50S ribosomal subunit. Contacts protein L29, and trigger factor when it is bound to the ribosome.

Functionally, one of the early assembly proteins it binds 23S rRNA. One of the proteins that surrounds the polypeptide exit tunnel on the outside of the ribosome. Forms the main docking site for trigger factor binding to the ribosome. This is Large ribosomal subunit protein uL23 from Mycobacterium sp. (strain JLS).